Here is a 197-residue protein sequence, read N- to C-terminus: Putative methyltransferase Mtx subunit A (197 aa).

The protein belongs to the MtrA family. May be part of a complex composed of 3 subunits; MtxA, MtxH and MtxX.

The protein is Putative methyltransferase Mtx subunit A (mtxA) of Methanosarcina barkeri (strain Fusaro / DSM 804).